The chain runs to 195 residues: Imidazoleglycerol-phosphate dehydratase (195 aa).

It belongs to the imidazoleglycerol-phosphate dehydratase family.

It localises to the cytoplasm. The catalysed reaction is D-erythro-1-(imidazol-4-yl)glycerol 3-phosphate = 3-(imidazol-4-yl)-2-oxopropyl phosphate + H2O. The protein operates within amino-acid biosynthesis; L-histidine biosynthesis; L-histidine from 5-phospho-alpha-D-ribose 1-diphosphate: step 6/9. This chain is Imidazoleglycerol-phosphate dehydratase, found in Thiobacillus denitrificans (strain ATCC 25259 / T1).